We begin with the raw amino-acid sequence, 265 residues long: Capsule polysaccharide export inner-membrane protein BexB (265 aa).

The next 6 helical transmembrane spans lie at 37–57, 64–84, 118–138, 151–171, 178–198, and 235–255; these read IGFFWLFVEPLLMTFFIVMMW, KFSTLNMIAFVMTGYPMAMMW, LLEVAGASIAQILFMAILVMI, LIAWFLMAMFAFGLGLIICAI, FGKIWGTLSFVLLPISGAFFF, and ESIGFLVVSDLALLLLGLVMV. Positions 37–258 constitute an ABC transmembrane type-2 domain; it reads IGFFWLFVEP…LLGLVMVKNF (222 aa).

Belongs to the ABC-2 integral membrane protein family.

The protein localises to the cell inner membrane. Its function is as follows. May form an ATP-driven capsule polysaccharide export apparatus, in association with the BexA, BexC and BexD proteins. In Haemophilus influenzae, this protein is Capsule polysaccharide export inner-membrane protein BexB (bexB).